A 183-amino-acid chain; its full sequence is Inner membrane-spanning protein YciB (183 aa).

The next 5 membrane-spanning stretches (helical) occupy residues 19 to 39, 53 to 73, 76 to 96, 121 to 141, and 151 to 171; these read LYGV…QLIV, IMGI…DLNF, WKVT…QFVF, LGWA…SYYF, and TFGF…YLYP.

The protein belongs to the YciB family.

It is found in the cell inner membrane. Its function is as follows. Plays a role in cell envelope biogenesis, maintenance of cell envelope integrity and membrane homeostasis. The chain is Inner membrane-spanning protein YciB from Actinobacillus pleuropneumoniae serotype 3 (strain JL03).